Here is a 711-residue protein sequence, read N- to C-terminus: MSVPSSLSQSAINANSHGGPALSFPFPLHAAHNQLLNAKLQATAVVPKDLRSAMGEGSVPEPGPANAKWLKEGQNQLRRAATAHRDQNRNVTLTLAEEASQEAETAPLGPKGLMHLYSELELSAHNAANRGLHGSALIINTQGLGPDEGEEKAAGEVEEEDEDEEEEDEEEEDLSSPQGLPEPLENVEVPSGPQVLTDGPREHSKSASLLFGMRNSAASDEDSSWATLSQGSPSYGSPEDTDSFWNPNAFETDSDLPAGWMRVQDTSGTYYWHIPTGTTQWEPPGRASPSQGNSPQEESQLTWTGFAHQEGFEEGEFWKDEPSEEAPMELGLKDPEEGTLPFSAQSLSPEPVPQEEENLPQRNANPGIKCFAVRSLGWVEMTEEELAPGRSSVAVNNCIRQLSYHKNNLHDPMSGGWGEGKDLLLQLEDETLKLVEPQNQTLLHAQPIVSIRVWGVGRDSGRERDFAYVARDKLTQMLKCHVFRCEAPAKNIATSLHEICSKIMSERRNARCLVNGLSLDHSKLVDVPFQVEFPAPKNELVQKFQVYYLGNVPVAKPVGVDVINGALESVLSSSSREQWTPSHVSVAPATLTILHQQTEAVLGECRVRFLSFLAVGRDVHTFAFIMAAGPASFCCHMFWCEPNAASLSEAVQAACMLRYQKCLDARSQTSTSCLPAPPAESVARRVGWTVRRGVQSLWGSLKPKRLGSQTP.

The residue at position 135 (Ser-135) is a Phosphoserine. Disordered regions lie at residues 140-257 (NTQG…SDLP), 277-300 (GTTQ…EESQ), and 321-364 (EPSE…QRNA). The segment covering 156–174 (EVEEEDEDEEEEDEEEEDL) has biased composition (acidic residues). Lys-205 is subject to N6-acetyllysine. The segment covering 224 to 235 (SWATLSQGSPSY) has biased composition (polar residues). In terms of domain architecture, WW spans 254 to 286 (SDLPAGWMRVQDTSGTYYWHIPTGTTQWEPPGR). The segment covering 288 to 300 (SPSQGNSPQEESQ) has biased composition (polar residues). PID domains follow at residues 365–533 (NPGI…QVEF) and 538–700 (NELV…LWGS). Ser-460 carries the phosphoserine; by PKC modification. Ser-518 carries the phosphoserine modification. Tyr-548 is modified (phosphotyrosine; by ABL1). Ser-611 is subject to Phosphoserine; by SGK1. Lys-702 bears the N6-acetyllysine mark.

In terms of assembly, component of a complex, at least composed of APBB1, RASD1/DEXRAS1 and APP. Interacts (via PID domain 2) with APP (with the intracellular domain of the amyloid-beta precursor protein). Interacts (via PID domain 2) with RASD1/DEXRAS1; impairs the transcription activation activity. Interacts (via PID domain 1) with KAT5/TIP60. Interacts (via the WW domain) with the proline-rich region of APBB1IP. Interacts with TSHZ1 and TSHZ2. Interacts (via the WW domain) with histone H2AX (when phosphorylated on 'Tyr-142') and the proline-rich region of ENAH. Interacts with MAPK8. Interacts (via PID domain 1) with TSHZ3 (via homeobox domain). Interacts with SET. Found in a trimeric complex with HDAC1 and TSHZ3; the interaction between HDAC1 and APBB1 is mediated by TSHZ3. Interacts (via WWW domain) with NEK6. Interacts (via WWW domain) with ABL1. Interacts with RNF157. Interacts with ARF6. In terms of processing, polyubiquitination by RNF157 leads to degradation by the proteasome. Phosphorylation at Ser-611 by SGK1 promotes its localization to the nucleus. Phosphorylated following nuclear translocation. Phosphorylation at Tyr-547 by ABL1 enhances transcriptional activation activity and reduces the affinity for RASD1/DEXRAS1. Phosphorylated at Ser-460 by PKC upon insulin activation. Post-translationally, acetylation at Lys-205 and Lys-702 by KAT5 promotes its transcription activator activity. As to expression, brain, not in liver, very low in other tissues. The long (neuron-specific) form is expressed only in brain.

It localises to the cell membrane. The protein resides in the cytoplasm. Its subcellular location is the nucleus. The protein localises to the cell projection. It is found in the growth cone. It localises to the nucleus speckle. Functionally, transcription coregulator that can have both coactivator and corepressor functions. Adapter protein that forms a transcriptionally active complex with the gamma-secretase-derived amyloid precursor protein (APP) intracellular domain. Plays a central role in the response to DNA damage by translocating to the nucleus and inducing apoptosis. May act by specifically recognizing and binding histone H2AX phosphorylated on 'Tyr-142' (H2AXY142ph) at double-strand breaks (DSBs), recruiting other pro-apoptosis factors such as MAPK8/JNK1. Required for histone H4 acetylation at double-strand breaks (DSBs). Its ability to specifically bind modified histones and chromatin modifying enzymes such as KAT5/TIP60, probably explains its transcription activation activity. Functions in association with TSHZ3, SET and HDAC factors as a transcriptional repressor, that inhibits the expression of CASP4. Associates with chromatin in a region surrounding the CASP4 transcriptional start site(s). Involved in hippocampal neurite branching and neuromuscular junction formation, as a result plays a role in spatial memory functioning. Plays a role in the maintenance of lens transparency. May play a role in muscle cell strength. Acts as a molecular adapter that functions in neurite outgrowth by activating the RAC1-ARF6 axis upon insulin treatment. This chain is Amyloid beta precursor protein binding family B member 1, found in Rattus norvegicus (Rat).